Consider the following 304-residue polypeptide: HPr kinase/phosphorylase (304 aa).

Active-site residues include histidine 136 and lysine 157. 151–158 (GESGIGKS) is an ATP binding site. Serine 158 is a Mg(2+) binding site. Aspartate 175 (proton acceptor; for phosphorylation activity. Proton donor; for dephosphorylation activity) is an active-site residue. Positions 198-207 (LEVRGMGIID) are important for the catalytic mechanism of both phosphorylation and dephosphorylation. Glutamate 199 contributes to the Mg(2+) binding site. Arginine 240 is a catalytic residue. Residues 261-266 (PIRPGR) form an important for the catalytic mechanism of dephosphorylation region.

Belongs to the HPrK/P family. As to quaternary structure, homohexamer. It depends on Mg(2+) as a cofactor.

The enzyme catalyses [HPr protein]-L-serine + ATP = [HPr protein]-O-phospho-L-serine + ADP + H(+). The catalysed reaction is [HPr protein]-O-phospho-L-serine + phosphate + H(+) = [HPr protein]-L-serine + diphosphate. Its function is as follows. Catalyzes the ATP- as well as the pyrophosphate-dependent phosphorylation of a specific serine residue in HPr, a phosphocarrier protein of the phosphoenolpyruvate-dependent sugar phosphotransferase system (PTS). HprK/P also catalyzes the pyrophosphate-producing, inorganic phosphate-dependent dephosphorylation (phosphorolysis) of seryl-phosphorylated HPr (P-Ser-HPr). The two antagonistic activities of HprK/P are regulated by several intracellular metabolites, which change their concentration in response to the absence or presence of rapidly metabolisable carbon sources (glucose, fructose, etc.) in the growth medium. Therefore, by controlling the phosphorylation state of HPr, HPrK/P is a sensor enzyme that plays a major role in the regulation of carbon metabolism and sugar transport: it mediates carbon catabolite repression (CCR), and regulates PTS-catalyzed carbohydrate uptake and inducer exclusion. The chain is HPr kinase/phosphorylase from Clostridium acetobutylicum (strain ATCC 824 / DSM 792 / JCM 1419 / IAM 19013 / LMG 5710 / NBRC 13948 / NRRL B-527 / VKM B-1787 / 2291 / W).